A 154-amino-acid polypeptide reads, in one-letter code: Interleukin-2 (154 aa).

The signal sequence occupies residues Met1 to Gly20. O-linked (GalNAc...) threonine glycosylation occurs at Thr23. Cys78 and Cys126 are disulfide-bonded.

This sequence belongs to the IL-2 family.

It localises to the secreted. In terms of biological role, cytokine produced by activated CD4-positive helper T-cells and to a lesser extend activated CD8-positive T-cells and natural killer (NK) cells that plays pivotal roles in the immune response and tolerance. Binds to a receptor complex composed of either the high-affinity trimeric IL-2R (IL2RA/CD25, IL2RB/CD122 and IL2RG/CD132) or the low-affinity dimeric IL-2R (IL2RB and IL2RG). Interaction with the receptor leads to oligomerization and conformation changes in the IL-2R subunits resulting in downstream signaling starting with phosphorylation of JAK1 and JAK3. In turn, JAK1 and JAK3 phosphorylate the receptor to form a docking site leading to the phosphorylation of several substrates including STAT5. This process leads to activation of several pathways including STAT, phosphoinositide-3-kinase/PI3K and mitogen-activated protein kinase/MAPK pathways. Functions as a T-cell growth factor and can increase NK-cell cytolytic activity as well. Promotes strong proliferation of activated B-cells and subsequently immunoglobulin production. Plays a pivotal role in regulating the adaptive immune system by controlling the survival and proliferation of regulatory T-cells, which are required for the maintenance of immune tolerance. Moreover, participates in the differentiation and homeostasis of effector T-cell subsets, including Th1, Th2, Th17 as well as memory CD8-positive T-cells. This is Interleukin-2 (IL2) from Sus scrofa (Pig).